The primary structure comprises 351 residues: AT-hook motif nuclear-localized protein 10 (351 aa).

The disordered stretch occupies residues 1-151; it reads MSGSETGLMA…RPPGSSSKRL (151 aa). Positions 23 to 37 are enriched in low complexity; it reads HQQQQHSQAQPQQSQ. The segment covering 60-77 has biased composition (polar residues); it reads SPPQQYQPNSAGENSVLN. A Bipartite nuclear localization signal motif is present at residues 97-105; sequence KKRRGRPRK. 2 consecutive DNA-binding regions (a.T hook) follow at residues 97-109 and 138-149; these read KKRR…YGPD and KKRGRPPGSSSK. Residues 159–301 form the PPC domain; sequence TGIGFTPHVL…QMGLSSPVLP (143 aa). Polar residues-rich tracts occupy residues 310–325 and 334–351; these read MTPS…SESS and IHQS…MPWK. Residues 310 to 351 form a disordered region; sequence MTPSSPQSRGTMSESSCGGGHGSPIHQSTGGPYNNTINMPWK.

It is found in the nucleus. Transcription factor that specifically binds AT-rich DNA sequences related to the nuclear matrix attachment regions (MARs). In Arabidopsis thaliana (Mouse-ear cress), this protein is AT-hook motif nuclear-localized protein 10.